We begin with the raw amino-acid sequence, 171 residues long: PIDD1 alternative open reading frame protein (171 aa).

Disordered stretches follow at residues M1 to G22 and I76 to A156. Over residues G84 to P99 the composition is skewed to low complexity.

In terms of assembly, interacts with calpain-2 catalytic subunit CAPN2. In terms of processing, cleaved in vitro following UV irradiation to induce caspase-mediated apoptosis and this cleavage is inhibited by a broad-spectrum caspase inhibitor.

Its subcellular location is the cytoplasm. It is found in the cytoskeleton. This is PIDD1 alternative open reading frame protein from Homo sapiens (Human).